Reading from the N-terminus, the 385-residue chain is 1-deoxy-D-xylulose 5-phosphate reductoisomerase (385 aa).

The NADPH site is built by Thr-10, Gly-11, Ser-12, Ile-13, Lys-37, and Asn-124. Lys-125 lines the 1-deoxy-D-xylulose 5-phosphate pocket. Glu-126 lines the NADPH pocket. Residue Asp-150 participates in Mn(2+) binding. 1-deoxy-D-xylulose 5-phosphate-binding residues include Ser-151, Glu-152, Ser-176, and His-199. Mn(2+) is bound at residue Glu-152. Gly-205 provides a ligand contact to NADPH. The 1-deoxy-D-xylulose 5-phosphate site is built by Ser-212, Asn-217, Lys-218, and Glu-221. Glu-221 contacts Mn(2+).

Belongs to the DXR family. Mg(2+) serves as cofactor. It depends on Mn(2+) as a cofactor.

It carries out the reaction 2-C-methyl-D-erythritol 4-phosphate + NADP(+) = 1-deoxy-D-xylulose 5-phosphate + NADPH + H(+). It functions in the pathway isoprenoid biosynthesis; isopentenyl diphosphate biosynthesis via DXP pathway; isopentenyl diphosphate from 1-deoxy-D-xylulose 5-phosphate: step 1/6. Its function is as follows. Catalyzes the NADPH-dependent rearrangement and reduction of 1-deoxy-D-xylulose-5-phosphate (DXP) to 2-C-methyl-D-erythritol 4-phosphate (MEP). In Clostridium novyi (strain NT), this protein is 1-deoxy-D-xylulose 5-phosphate reductoisomerase.